The chain runs to 935 residues: GPI ethanolamine phosphate transferase 1 (935 aa).

At 1–5 (MFGRL) the chain is on the cytoplasmic side. A helical transmembrane segment spans residues 6–26 (LLLGILFHVVFLKSIFDIYFV). Over 27 to 449 (TPLIHGMKQY…LQRYDWLLLR (423 aa)) the chain is Lumenal. N-linked (GlcNAc...) asparagine glycans are attached at residues asparagine 86, asparagine 134, asparagine 315, and asparagine 398. Residues 450-470 (SIVFFGYLSWIGYVICFVFSL) traverse the membrane as a helical segment. Topologically, residues 471–483 (NIEPSSKIVKPVS) are cytoplasmic. The chain crosses the membrane as a helical span at residues 484–503 (VVKRVAFNIPFLLICIFFYI). Residues 504–509 (QSSPPF) are Lumenal-facing. Residues 510–530 (YYGYALFPTIFLQLIHSIFPN) form a helical membrane-spanning segment. Topologically, residues 531–547 (TKLGFKNFLTVAKQKHG) are cytoplasmic. The chain crosses the membrane as a helical span at residues 548–568 (FSLLKILFISLCILCLLQFIV). At 569–576 (YSYFHREG) the chain is on the lumenal side. Residues 577 to 597 (FSVILMGLAAWPWLLHADYAF) form a helical membrane-spanning segment. Over 598-600 (SHK) the chain is Cytoplasmic. The chain crosses the membrane as a helical span at residues 601–621 (TISVSWSVLTSLLCFFTILPV). Residues 622 to 626 (NKKES) are Lumenal-facing. Residues 627-647 (LLFIFAGGFAMSVAGVFYILY) traverse the membrane as a helical segment. Over 648-663 (RRNQAFQYSSTVTNKQ) the chain is Cytoplasmic. Residues 664–684 (LVLQVLIIMATVPVTLKIADS) traverse the membrane as a helical segment. The Lumenal portion of the chain corresponds to 685 to 688 (LQRN). The helical transmembrane segment at 689–709 (IAIPPILRLVAFGLFITSYII) threads the bilayer. Residues 710-737 (PSHHIRSCKHYFLDRLAILFLTFSPTMC) are Cytoplasmic-facing. A helical transmembrane segment spans residues 738–758 (MLSISFEALFYVVLFITLGLW). The Lumenal segment spans residues 759–792 (MELETELQKYTEQLHPEYSRKKDAKFHLSLSHIR). Residues 793–813 (ISLFFYIFINVAFFGTGNVAS) form a helical membrane-spanning segment. Residues 814-835 (LSTFALDSVKRFIPVFNPVTQG) lie on the Cytoplasmic side of the membrane. A helical transmembrane segment spans residues 836-856 (ALLMYTILVPFIALSAAFGIM). At 857–865 (NKRLGGIQQ) the chain is on the lumenal side. Residues 866–886 (VTFFLAVGMADIVTINFFYLV) form a helical membrane-spanning segment. Residues 887 to 894 (KDEGSWKD) are Cytoplasmic-facing. The helical transmembrane segment at 895–915 (IGVSISHFCISNFLILFITAL) threads the bilayer. The Lumenal segment spans residues 916–935 (EHASAILCKNITYTIHEKVN). N-linked (GlcNAc...) asparagine glycosylation occurs at asparagine 925.

The protein belongs to the PIGG/PIGN/PIGO family. PIGN subfamily.

It is found in the endoplasmic reticulum membrane. It participates in glycolipid biosynthesis; glycosylphosphatidylinositol-anchor biosynthesis. In terms of biological role, ethanolamine phosphate transferase involved in glycosylphosphatidylinositol-anchor biosynthesis. Transfers ethanolamine phosphate to the first alpha-1,4-linked mannose of the glycosylphosphatidylinositol precursor of GPI-anchor. In Schizosaccharomyces pombe (strain 972 / ATCC 24843) (Fission yeast), this protein is GPI ethanolamine phosphate transferase 1 (its8).